The following is a 449-amino-acid chain: Probable hexaprenyl pyrophosphate synthase, mitochondrial (449 aa).

Lys122, Arg125, and His200 together coordinate isopentenyl diphosphate. Mg(2+) contacts are provided by Asp207 and Asp211. Arg216 contacts an all-trans-polyprenyl diphosphate. Arg217 serves as a coordination point for isopentenyl diphosphate. Positions 300, 301, 338, and 355 each coordinate an all-trans-polyprenyl diphosphate.

The protein belongs to the FPP/GGPP synthase family. It depends on Mg(2+) as a cofactor.

The protein localises to the mitochondrion. It functions in the pathway cofactor biosynthesis; ubiquinone biosynthesis. Its function is as follows. Assembly of polyisoprenoid side chains. The polyprenyl synthase of coenzyme Q biosynthesis catalyzes the formation from isopentenyl diphosphate of all trans-polyprenyl pyrophosphates generally ranging in length of between 6 and 10 isoprene units depending on the species. The polypeptide is Probable hexaprenyl pyrophosphate synthase, mitochondrial (Neurospora crassa (strain ATCC 24698 / 74-OR23-1A / CBS 708.71 / DSM 1257 / FGSC 987)).